The sequence spans 99 residues: Small ribosomal subunit protein bS20 (99 aa).

Belongs to the bacterial ribosomal protein bS20 family.

Binds directly to 16S ribosomal RNA. The polypeptide is Small ribosomal subunit protein bS20 (Prochlorococcus marinus (strain SARG / CCMP1375 / SS120)).